Reading from the N-terminus, the 261-residue chain is Claudin-18 (261 aa).

At 1–6 (MSTTTC) the chain is on the cytoplasmic side. Residues 7 to 27 (QVVAFLLSILGLAGCIAATGM) traverse the membrane as a helical segment. Residues 28-80 (DMWSTQDLYDNPVTSVFQYEGLWRSCVRQSSGFTECRPYFTILGLPAMLQAVR) are Extracellular-facing. Residues 81-101 (ALMIVGIVLGAIGLLVSIFAL) traverse the membrane as a helical segment. Topologically, residues 102–122 (KCIRIGSMEDSAKANMTLTSG) are cytoplasmic. A helical membrane pass occupies residues 123 to 143 (IMFIVSGLCAIAGVSVFANML). Over 144–174 (VTNFWMSTANMYTGMGGMVQTVQTRYTFGAA) the chain is Extracellular. The chain crosses the membrane as a helical span at residues 175 to 195 (LFVGWVAGGLTLIGGVMMCIA). The required for role in regulation of RANKL-induced osteoclast differentiation stretch occupies residues 195–261 (ACRGLAPEET…QSYPSKHDYV (67 aa)). Over 196 to 261 (CRGLAPEETN…QSYPSKHDYV (66 aa)) the chain is Cytoplasmic. Phosphoserine is present on S214. Positions 242-261 (DGGARTEDEVQSYPSKHDYV) are disordered.

The protein belongs to the claudin family. In terms of assembly, interacts with TJP2/ZO-2. Interacts with TJP1/ZO-1. Interacts with YAP1 (phosphorylated); the interaction sequesters YAP1 away from the nucleus and thereby restricts transcription of YAP1 target genes. As to quaternary structure, interacts with CLDN19. As to expression, expression is restricted to the lung. Expression is restricted to the stomach mucosa where it is predominantly observed in the epithelial cells of the pit region and the base of the gastric glands including exocrine and endocrine cells (at protein level).

Its subcellular location is the cell junction. It localises to the tight junction. The protein resides in the cell membrane. The protein localises to the lateral cell membrane. Its function is as follows. Involved in alveolar fluid homeostasis via regulation of alveolar epithelial tight junction composition and therefore ion transport and solute permeability, potentially via downstream regulation of the actin cytoskeleton organization and beta-2-adrenergic signaling. Required for lung alveolarization and maintenance of the paracellular alveolar epithelial barrier. Acts to maintain epithelial progenitor cell proliferation and organ size, via regulation of YAP1 localization away from the nucleus and thereby restriction of YAP1 target gene transcription. Acts as a negative regulator of RANKL-induced osteoclast differentiation, potentially via relocation of TJP2/ZO-2 away from the nucleus, subsequently involved in bone resorption in response to calcium deficiency. Mediates the osteoprotective effects of estrogen, potentially via acting downstream of estrogen signaling independently of RANKL signaling pathways. In terms of biological role, involved in the maintenance of homeostasis of the alveolar microenvironment via regulation of pH and subsequent T-cell activation in the alveolar space, is therefore indirectly involved in limiting C.neoformans infection. Functionally, required for the formation of the gastric paracellular barrier via its role in tight junction formation, thereby involved in the response to gastric acidification. This chain is Claudin-18 (CLDN18), found in Homo sapiens (Human).